The chain runs to 844 residues: RING finger containing E3 ubiquitin-protein ligase WSV222 (844 aa).

An ATP-binding site is contributed by 229 to 236 (AEDDKGKT). An RING-type; atypical zinc finger spans residues 308-359 (CGVCATSVEEDENEGKTTSLSWYQMNCKHYIHCECLMGMCAAAGNVQCPMCR).

Interacts with host UBE2E1/UBCH6; this interaction results in WSV222 auto-ubiquitination. Interacts with host tumor suppressor-like protein.

The enzyme catalyses S-ubiquitinyl-[E2 ubiquitin-conjugating enzyme]-L-cysteine + [acceptor protein]-L-lysine = [E2 ubiquitin-conjugating enzyme]-L-cysteine + N(6)-ubiquitinyl-[acceptor protein]-L-lysine.. The protein operates within protein modification; protein ubiquitination. Probable E3 ubiquitin-protein ligase which accepts ubiquitin from the E2 ubiquitin-conjugating enzyme UBE2E1/UBCH6 in the form of a thioester and then directly transfers the ubiquitin to targeted substrates. Mediates ubiquitination of host tumor-suppressor-like protein (TSL) targeting it for degradation. Might function as an anti-apoptosis protein by counteracting TSL-induced apoptosis. The polypeptide is RING finger containing E3 ubiquitin-protein ligase WSV222 (White spot syndrome virus (isolate Shrimp/China/Tongan/1996) (WSSV)).